Reading from the N-terminus, the 941-residue chain is DNA mismatch repair protein MutS (941 aa).

ATP is bound at residue 613 to 620 (GPNMAGKS).

The protein belongs to the DNA mismatch repair MutS family.

Its function is as follows. This protein is involved in the repair of mismatches in DNA. It is possible that it carries out the mismatch recognition step. This protein has a weak ATPase activity. The polypeptide is DNA mismatch repair protein MutS (Clostridium botulinum (strain Alaska E43 / Type E3)).